A 374-amino-acid chain; its full sequence is tRNA-specific 2-thiouridylase MnmA (374 aa).

Residues 17–24 (GMSGGVDS) and methionine 43 contribute to the ATP site. The tract at residues 103–105 (NPD) is interaction with target base in tRNA. The active-site Nucleophile is cysteine 108. An intrachain disulfide couples cysteine 108 to cysteine 204. Glycine 132 contributes to the ATP binding site. The interaction with tRNA stretch occupies residues 154-156 (KDQ). Cysteine 204 (cysteine persulfide intermediate) is an active-site residue. Residues 316–317 (RY) form an interaction with tRNA region.

It belongs to the MnmA/TRMU family.

It localises to the cytoplasm. The catalysed reaction is S-sulfanyl-L-cysteinyl-[protein] + uridine(34) in tRNA + AH2 + ATP = 2-thiouridine(34) in tRNA + L-cysteinyl-[protein] + A + AMP + diphosphate + H(+). In terms of biological role, catalyzes the 2-thiolation of uridine at the wobble position (U34) of tRNA, leading to the formation of s(2)U34. The polypeptide is tRNA-specific 2-thiouridylase MnmA (Pseudomonas entomophila (strain L48)).